Here is a 339-residue protein sequence, read N- to C-terminus: Nicotinate-nucleotide--dimethylbenzimidazole phosphoribosyltransferase (339 aa).

Residue E306 is the Proton acceptor of the active site.

Belongs to the CobT family.

It carries out the reaction 5,6-dimethylbenzimidazole + nicotinate beta-D-ribonucleotide = alpha-ribazole 5'-phosphate + nicotinate + H(+). It participates in nucleoside biosynthesis; alpha-ribazole biosynthesis; alpha-ribazole from 5,6-dimethylbenzimidazole: step 1/2. In terms of biological role, catalyzes the synthesis of alpha-ribazole-5'-phosphate from nicotinate mononucleotide (NAMN) and 5,6-dimethylbenzimidazole (DMB). This is Nicotinate-nucleotide--dimethylbenzimidazole phosphoribosyltransferase from Brucella melitensis biotype 1 (strain ATCC 23456 / CCUG 17765 / NCTC 10094 / 16M).